A 230-amino-acid chain; its full sequence is Orotidine 5'-phosphate decarboxylase (230 aa).

Substrate is bound by residues Asp-8, Lys-32, 59-68, Thr-118, Arg-178, Gln-187, Gly-207, and Arg-208; that span reads DLKLYDIPNT. Catalysis depends on Lys-61, which acts as the Proton donor.

The protein belongs to the OMP decarboxylase family. Type 1 subfamily. Homodimer.

The enzyme catalyses orotidine 5'-phosphate + H(+) = UMP + CO2. It functions in the pathway pyrimidine metabolism; UMP biosynthesis via de novo pathway; UMP from orotate: step 2/2. Its function is as follows. Catalyzes the decarboxylation of orotidine 5'-monophosphate (OMP) to uridine 5'-monophosphate (UMP). The protein is Orotidine 5'-phosphate decarboxylase of Nautilia profundicola (strain ATCC BAA-1463 / DSM 18972 / AmH).